The sequence spans 478 residues: MVRAKWKMVVSLILFMVSPGDGLFHAVYRSILVSQSFKGDAGQPLFLSPYIKNGKIKEGQRKSMVSPFPGMNDKSYAGYITVNQTYNSNLFFWFFPARMQPEDAPVVLWLQGGPGGSSMFGLFVEHGPYIITSNMTVVARDFPWTFTLSMLYIDNPVGTGFSFTDHFQGYATSEDDVAQDLYSALIQFFTLFPEYAKNDFYVTGESYAGKYVPALAHYIHSLNPVRKFKIRLKGIAIGDAYTDPESIIGGYAAFLYEIGLLDEQQQKYFQKQCSKCVKYIKEQEWMKAFEILDKLLDGDVTTGSSFFQNVTGCTNYYNILQCTEPKEQSYFAKFLTLPQVRQAIHVGNQNFSDGAEVEKHLREDTVKSVKPWLSEIMNYYKVLIYNGQLDIIVAAALTERSLMAMDWKGSRAYRRARRKVWKIFKSDNEVAGYVRRVGKFHQVIVRGGGHILPYDQPMRSFDMINRFIYDRGWEPYNS.

A signal peptide spans 1-22 (MVRAKWKMVVSLILFMVSPGDG). N-linked (GlcNAc...) asparagine glycans are attached at residues Asn-83 and Asn-134. Ser-206 is an active-site residue. N-linked (GlcNAc...) asparagine glycosylation is found at Asn-309 and Asn-350. Catalysis depends on residues Asp-390 and His-450.

The protein belongs to the peptidase S10 family.

Its function is as follows. May be involved in the digestion of phagocytosed particles in the lysosome, participation in an inflammatory protease cascade, and trimming of peptides for antigen presentation. This is Probable serine carboxypeptidase CPVL (Cpvl) from Mus musculus (Mouse).